The primary structure comprises 314 residues: tRNA pseudouridine synthase B (314 aa).

Position 43 (His-43) interacts with substrate. Asp-48 functions as the Nucleophile in the catalytic mechanism. 3 residues coordinate substrate: Tyr-76, Tyr-179, and Leu-200.

It belongs to the pseudouridine synthase TruB family. Type 1 subfamily.

The catalysed reaction is uridine(55) in tRNA = pseudouridine(55) in tRNA. Functionally, responsible for synthesis of pseudouridine from uracil-55 in the psi GC loop of transfer RNAs. This Cronobacter sakazakii (strain ATCC BAA-894) (Enterobacter sakazakii) protein is tRNA pseudouridine synthase B.